Here is a 195-residue protein sequence, read N- to C-terminus: Probable GTP-binding protein EngB (195 aa).

The region spanning 24–195 (ELPEIALAGR…EAWDAILEKL (172 aa)) is the EngB-type G domain. GTP is bound by residues 32 to 39 (GRSNVGKS), 59 to 63 (GKTQL), 77 to 80 (DVPG), 144 to 147 (TKAD), and 176 to 178 (FSS). 2 residues coordinate Mg(2+): serine 39 and threonine 61.

The protein belongs to the TRAFAC class TrmE-Era-EngA-EngB-Septin-like GTPase superfamily. EngB GTPase family. Requires Mg(2+) as cofactor.

Functionally, necessary for normal cell division and for the maintenance of normal septation. This Streptococcus pneumoniae (strain Hungary19A-6) protein is Probable GTP-binding protein EngB.